The sequence spans 446 residues: Peptide chain release factor 1, mitochondrial (446 aa).

A mitochondrion-targeting transit peptide spans 1–62 (MSHHLCIWLF…LLNKSWSRGC (62 aa)). The interval 298–362 (PKDLRVDTFR…LRARLYQQII (65 aa)) is GGQ domain. Positions 312–314 (GGQ) match the GGQ motif. Residue Gln314 is modified to N5-methylglutamine.

It belongs to the prokaryotic/mitochondrial release factor family. Post-translationally, methylation of glutamine in the GGQ triplet by HEMK1 is conserved from bacteria to mammals.

The protein resides in the mitochondrion. In terms of biological role, mitochondrial peptide chain release factor that directs the termination of translation in response to the peptide chain non-canonical stop codons AGG and AGA. Non-canonical termination codons AGG and AGA are found at the end of MT-CO1/COX1 and MT-ND6/ND6 open reading frames, respectively. Recognizes non-canonical stop codons via a network of interactions between the codon, MTRF1 and the ribosomal RNA (rRNA): in contrast to other translation release factors, which identify the codon in the A-site via direct interactions of amino acid side chains with the bases, MTRF1 repositions the first 2 bases of the stop codon to use an intricate network of interactions that includes residues of the release factor, the rRNA of the small ribosomal subunit, as well as neighboring bases of the mRNA. This Mus musculus (Mouse) protein is Peptide chain release factor 1, mitochondrial.